A 124-amino-acid chain; its full sequence is Small ribosomal subunit protein uS12 (124 aa).

The disordered stretch occupies residues Met1–Asp25. Asp89 is subject to 3-methylthioaspartic acid.

Belongs to the universal ribosomal protein uS12 family. Part of the 30S ribosomal subunit. Contacts proteins S8 and S17. May interact with IF1 in the 30S initiation complex.

In terms of biological role, with S4 and S5 plays an important role in translational accuracy. Its function is as follows. Interacts with and stabilizes bases of the 16S rRNA that are involved in tRNA selection in the A site and with the mRNA backbone. Located at the interface of the 30S and 50S subunits, it traverses the body of the 30S subunit contacting proteins on the other side and probably holding the rRNA structure together. The combined cluster of proteins S8, S12 and S17 appears to hold together the shoulder and platform of the 30S subunit. The polypeptide is Small ribosomal subunit protein uS12 (Xanthomonas campestris pv. campestris (strain 8004)).